The primary structure comprises 126 residues: Large ribosomal subunit protein uL22 (126 aa).

Belongs to the universal ribosomal protein uL22 family. Part of the 50S ribosomal subunit.

Its function is as follows. This protein binds specifically to 23S rRNA; its binding is stimulated by other ribosomal proteins, e.g. L4, L17, and L20. It is important during the early stages of 50S assembly. It makes multiple contacts with different domains of the 23S rRNA in the assembled 50S subunit and ribosome. The globular domain of the protein is located near the polypeptide exit tunnel on the outside of the subunit, while an extended beta-hairpin is found that lines the wall of the exit tunnel in the center of the 70S ribosome. In Maricaulis maris (strain MCS10) (Caulobacter maris), this protein is Large ribosomal subunit protein uL22.